Consider the following 340-residue polypeptide: Outer membrane protein B (340 aa).

The N-terminal stretch at 1-26 is a signal peptide; the sequence is MSSKLVNSLRLTFLSFLGIVSTSLDA.

It belongs to the chlamydial OMP family.

Its subcellular location is the cell outer membrane. The sequence is that of Outer membrane protein B (ompB) from Chlamydia muridarum (strain MoPn / Nigg).